Reading from the N-terminus, the 119-residue chain is MNTEKLETLLGFYKQYKALSEYIDKKYKLSLNDLAVLDLTMKHCKDEKVLMQSFLKTAMDELDLSRTKLLVSIRRLIEKERLSKVRSSKDERKIYIYLNDDDISKFNALFEDVEQFLNI.

The H-T-H motif DNA-binding region spans 55–78 (LKTAMDELDLSRTKLLVSIRRLIE).

Belongs to the SarA family.

Its subcellular location is the cytoplasm. In terms of biological role, involved in the regulation of virulence genes. Acts as a repressor of the agr locus and consequently targets genes regulated by the agr system such as sspA, hla and hlb. Binds directly to the agr promoter region. This Staphylococcus aureus (strain bovine RF122 / ET3-1) protein is HTH-type transcriptional regulator SarX (sarX).